The primary structure comprises 250 residues: Large ribosomal subunit protein uL29m (250 aa).

Residue lysine 144 is modified to N6-acetyllysine.

It belongs to the universal ribosomal protein uL29 family. In terms of assembly, component of the mitochondrial large ribosomal subunit (mt-LSU). Mature mammalian 55S mitochondrial ribosomes consist of a small (28S) and a large (39S) subunit. The 28S small subunit contains a 12S ribosomal RNA (12S mt-rRNA) and 30 different proteins. The 39S large subunit contains a 16S rRNA (16S mt-rRNA), a copy of mitochondrial valine transfer RNA (mt-tRNA(Val)), which plays an integral structural role, and 52 different proteins.

It localises to the mitochondrion. The protein is Large ribosomal subunit protein uL29m (MRPL47) of Homo sapiens (Human).